Consider the following 179-residue polypeptide: Large ribosomal subunit protein uL5 (179 aa).

It belongs to the universal ribosomal protein uL5 family. In terms of assembly, part of the 50S ribosomal subunit; part of the 5S rRNA/L5/L18/L25 subcomplex. Contacts the 5S rRNA and the P site tRNA. Forms a bridge to the 30S subunit in the 70S ribosome.

Its function is as follows. This is one of the proteins that bind and probably mediate the attachment of the 5S RNA into the large ribosomal subunit, where it forms part of the central protuberance. In the 70S ribosome it contacts protein S13 of the 30S subunit (bridge B1b), connecting the 2 subunits; this bridge is implicated in subunit movement. Contacts the P site tRNA; the 5S rRNA and some of its associated proteins might help stabilize positioning of ribosome-bound tRNAs. This chain is Large ribosomal subunit protein uL5, found in Xylella fastidiosa (strain M23).